Reading from the N-terminus, the 233-residue chain is Glyceraldehyde 3-phosphate phosphatase (233 aa).

Belongs to the HAD-like hydrolase superfamily. Mg(2+) serves as cofactor.

Its function is as follows. Catalyzes the dephosphorylation of D,L-glyceraldehyde 3-phosphate in vitro. The sequence is that of Glyceraldehyde 3-phosphate phosphatase from Methanopyrus kandleri (strain AV19 / DSM 6324 / JCM 9639 / NBRC 100938).